We begin with the raw amino-acid sequence, 64 residues long: PYLa/PGLa B (64 aa).

The first 20 residues, 1–20 (MYKQIFLCLIIAALCATIMA), serve as a signal peptide directing secretion. Residues 21-35 (EASALADADDDDDKR) constitute a propeptide that is removed on maturation. Leucine amide is present on leucine 59. The propeptide occupies 60 to 64 (GRRDS).

The protein belongs to the gastrin/cholecystokinin family. Magainin subfamily. In terms of tissue distribution, expressed by the skin glands. Synthesized in the stomach and stored in a novel granular multinucleated cell in the gastric mucosa. Stored as active, processed peptides in large granules within the granular gland secretions of the skin.

It localises to the secreted. PGLa and PGLa-H display a broad-spectrum of antibacterial activity against a range of Gram-positive and Gram-negative bacteria. PGLa also displays antifungal activity against C.albicans ATCC 14053. PGLa-H shows moderate antibacterial activity against the multidrug-resistant methicillin-resistant S.aureus (MRSA) but exhibits very little hemolytic activity. The polypeptide is PYLa/PGLa B (pgla-b) (Xenopus laevis (African clawed frog)).